The chain runs to 551 residues: Solute carrier family 22 member 6 (551 aa).

The Cytoplasmic portion of the chain corresponds to 1–9 (MAFNDLLKQ). The chain crosses the membrane as a helical span at residues 10-30 (VGGVGRFQLIQVTMVVAPLLL). Residues 31-135 (MASHNTLQNF…LVCSHRAFRQ (105 aa)) are Extracellular-facing. N-linked (GlcNAc...) asparagine glycosylation is found at N39, N56, N92, and N113. Residues 136-156 (LAQSLYMVGVLLGAMVFGYLA) traverse the membrane as a helical segment. Residues 157-164 (DRLGRRKV) are Cytoplasmic-facing. Residues 165 to 187 (LILNYLQTAVSGTCAAYAPNYTV) traverse the membrane as a helical segment. Over 188–195 (YCVFRLLS) the chain is Extracellular. Residues 196-216 (GMSLASIAINCMTLNVEWMPI) form a helical membrane-spanning segment. At 217–224 (HTRAYVGT) the chain is on the cytoplasmic side. The helical transmembrane segment at 225 to 245 (LIGYVYSLGQFLLAGIAYAVP) threads the bilayer. Over 246-248 (HWR) the chain is Extracellular. A helical membrane pass occupies residues 249–269 (HLQLVVSVPFFIAFIYSWFFI). Residues 270–337 (ESARWYSSSG…ELLRCPTLRH (68 aa)) are Cytoplasmic-facing. The helical transmembrane segment at 338–358 (LFLCLSMLWFATSFAYYGLVM) threads the bilayer. Residues 359 to 368 (DLQGFGVSMY) are Extracellular-facing. Residues 369 to 389 (LIQVIFGAVDLPAKFVCFLVI) form a helical membrane-spanning segment. At 390–395 (NSMGRR) the chain is on the cytoplasmic side. Residues 396-416 (PAQMASLLLAGICILVNGIIP) traverse the membrane as a helical segment. At 417–425 (KSHTIIRTS) the chain is on the extracellular side. A helical membrane pass occupies residues 426-446 (LAVLGKGCLASSFNCIFLYTG). Residues 447–484 (ELYPTVIRQTGLGMGSTMARVGSIVSPLVSMTAEFYPS) lie on the Cytoplasmic side of the membrane. A helical membrane pass occupies residues 485 to 505 (MPLFIFGAVPVVASAVTALLP). Residues 506–551 (ETLGQPLPDTVQDLKSRSRGKQNQQQQEQQKQMMPLQASTQEKNGL) lie on the Extracellular side of the membrane. The tract at residues 514–551 (DTVQDLKSRSRGKQNQQQQEQQKQMMPLQASTQEKNGL) is disordered. Low complexity predominate over residues 526–537 (KQNQQQQEQQKQ). The segment covering 542–551 (QASTQEKNGL) has biased composition (polar residues).

The protein belongs to the major facilitator (TC 2.A.1) superfamily. Organic cation transporter (TC 2.A.1.19) family. Glycosylated. Glycosylation is necessary for proper targeting of the transporter to the plasma membrane. Highly expressed in kidney; in the particular segment of the proximal tubule. In kidney, found preferentially in the cortex and outer medulla and weakly in the inner medulla. Expressed to a lower extent in brain.

It localises to the cell membrane. It is found in the basolateral cell membrane. The protein resides in the basal cell membrane. The catalysed reaction is (6R)-L-erythro-5,6,7,8-tetrahydrobiopterin(out) + a dicarboxylate(in) = (6R)-L-erythro-5,6,7,8-tetrahydrobiopterin(in) + a dicarboxylate(out). It catalyses the reaction L-erythro-7,8-dihydrobiopterin(out) + a dicarboxylate(in) = L-erythro-7,8-dihydrobiopterin(in) + a dicarboxylate(out). It carries out the reaction L-sepiapterin(out) + a dicarboxylate(in) = L-sepiapterin(in) + a dicarboxylate(out). The enzyme catalyses prostaglandin F2alpha(out) + a dicarboxylate(in) = prostaglandin F2alpha(in) + a dicarboxylate(out). The catalysed reaction is prostaglandin E2(out) + a dicarboxylate(in) = prostaglandin E2(in) + a dicarboxylate(out). It catalyses the reaction 3',5'-cyclic AMP(out) + a dicarboxylate(in) = 3',5'-cyclic AMP(in) + a dicarboxylate(out). It carries out the reaction 3',5'-cyclic GMP(out) + a dicarboxylate(in) = 3',5'-cyclic GMP(in) + a dicarboxylate(out). The enzyme catalyses urate(out) + a dicarboxylate(in) = urate(in) + a dicarboxylate(out). The catalysed reaction is kynurenate(out) + glutarate(in) = kynurenate(in) + glutarate(out). It catalyses the reaction (indol-3-yl)acetate(out) + a dicarboxylate(in) = (indol-3-yl)acetate(in) + a dicarboxylate(out). It carries out the reaction indoxyl sulfate(out) + a dicarboxylate(in) = indoxyl sulfate(in) + a dicarboxylate(out). The enzyme catalyses N-benzoylglycine(out) + a dicarboxylate(in) = N-benzoylglycine(in) + a dicarboxylate(out). The catalysed reaction is 3-carboxy-4-methyl-5-propyl-2-furanpropanoate(out) + a dicarboxylate(in) = 3-carboxy-4-methyl-5-propyl-2-furanpropanoate(in) + a dicarboxylate(out). Its function is as follows. Secondary active transporter that functions as a Na(+)-independent organic anion (OA)/dicarboxylate antiporter where the uptake of one molecule of OA into the cell is coupled with an efflux of one molecule of intracellular dicarboxylate such as alpha-ketoglutarate or glutarate. Mediates the uptake of OA across the basolateral side of proximal tubule epithelial cells, thereby contributing to the renal elimination of endogenous OA from the systemic circulation into the urine. Function as a biopterin transporters involved in the uptake and the secretion of coenzymes tetrahydrobiopterin (BH4) dihydrobiopterin (BH2) and sepiapterin to urine, thereby determining baseline levels of blood biopterins. Transports prostaglandin E2 (PGE2) and prostaglandin F2-alpha (PGF2-alpha) and may contribute to their renal excretion. Also mediates the uptake of cyclic nucleotides such as cAMP and cGMP. Involved in the transport of neuroactive tryptophan metabolites kynurenate (KYNA) and xanthurenate (XA) and may contribute to their secretion from the brain. May transport glutamate. Also involved in the disposition of uremic toxins and potentially toxic xenobiotics by the renal organic anion secretory pathway, helping reduce their undesired toxicological effects on the body. Uremic toxins include the indoxyl sulfate (IS), hippurate, indole acetate (IA), 3-carboxy-4- methyl-5-propyl-2-furanpropionate(CMPF) and urate. Xenobiotics include the mycotoxin ochratoxin (OTA). May also contribute to the transport of organic compounds in testes across the blood-testis-barrier. May also work as a bidirectional OA/dicarboxylate exchanger. This Rattus norvegicus (Rat) protein is Solute carrier family 22 member 6.